Here is a 357-residue protein sequence, read N- to C-terminus: S-adenosylmethionine:tRNA ribosyltransferase-isomerase (357 aa).

This sequence belongs to the QueA family. Monomer.

It localises to the cytoplasm. It catalyses the reaction 7-aminomethyl-7-carbaguanosine(34) in tRNA + S-adenosyl-L-methionine = epoxyqueuosine(34) in tRNA + adenine + L-methionine + 2 H(+). It participates in tRNA modification; tRNA-queuosine biosynthesis. In terms of biological role, transfers and isomerizes the ribose moiety from AdoMet to the 7-aminomethyl group of 7-deazaguanine (preQ1-tRNA) to give epoxyqueuosine (oQ-tRNA). The protein is S-adenosylmethionine:tRNA ribosyltransferase-isomerase of Phenylobacterium zucineum (strain HLK1).